Reading from the N-terminus, the 532-residue chain is uncharacterized protein (532 aa).

Helical transmembrane passes span 13–33 (MSLL…QTLL), 53–73 (WLTT…AFLI), 80–100 (SLFL…GIAP), 111–131 (IQAV…LLIF), 142–162 (IFGL…GWII), 169–189 (IMFY…FFIF), 203–223 (LGAI…SEAG), 231–251 (IVLS…VQQL), 273–293 (VINI…PIYL), 306–326 (LLLL…GILF), 334–354 (LAII…QLTI), 361–381 (IMLI…PVMT), and 483–503 (INDA…LSIF).

The protein belongs to the major facilitator superfamily. EmrB family.

It localises to the cell membrane. This is an uncharacterized protein from Bacillus subtilis (strain 168).